The following is a 395-amino-acid chain: Ankyrin repeat domain-containing protein 65 (395 aa).

ANK repeat units lie at residues 52-81, 85-114, 118-147, 151-180, 185-212, 213-241, 245-274, 278-307, 311-340, and 344-373; these read QAWGHLLQAVWKGHTGLVTQLLRQGASVEE, AGRTPLHLAVLRGHVSLVRLLLQRGAQVGA, AGRTPLHEAAWHGPSRVAELLLRRGAPANA, AGLTPLHWAAALGRTLMVGHLLAAPHPGPT, RGWTAGHWAAAGGQMAVLELLGANGGAR, LDSVLLVAAAAGRATALRLLLAQGAPVDA, VGATVLGVAAGLGRRQDMEVLLEHGADPSL, HGRSALHRAAAGGHLLAVQLLAAWGAEVDS, LGLTPLHHAARGGHIEVTGHLLDRGAEINA, and LHKTPLHLAMEHGHGPTAELLLSRGASPTL.

This is Ankyrin repeat domain-containing protein 65 (ANKRD65) from Bos taurus (Bovine).